We begin with the raw amino-acid sequence, 346 residues long: Short-wave-sensitive opsin 1 (346 aa).

Over 1-31 (MSGEDEFYLFQNISSVGPWDGPQYHIAPVWA) the chain is Extracellular. N-linked (GlcNAc...) asparagine glycosylation occurs at Asn12. A helical membrane pass occupies residues 32 to 56 (FHLQAAFMGFVFFAGTPLNATVLVA). Residues 57 to 68 (TLHYKKLRQPLN) lie on the Cytoplasmic side of the membrane. A helical transmembrane segment spans residues 69 to 94 (YILVNVSLGGFLFCIFSVFTVFIASC). The Extracellular segment spans residues 95-108 (HGYFLFGRHVCALE). A disulfide bond links Cys105 and Cys182. The chain crosses the membrane as a helical span at residues 109–128 (AFLGSVAGLVTGWSLAFLAF). At 129–147 (ERYLVICKPFGNIRFNSKH) the chain is on the cytoplasmic side. A helical transmembrane segment spans residues 148–171 (ALTVVLITWTIGIGVSIPPFFGWS). The Extracellular segment spans residues 172-197 (RFIPEGLQCSCGPDWYTVGTKYRSEH). A helical membrane pass occupies residues 198-225 (YTWFLFIFCFIIPLSLICFSYFQLLRTL). Residues 226 to 247 (RAVAAQQQESATTQKAEREVSH) lie on the Cytoplasmic side of the membrane. A helical transmembrane segment spans residues 248-271 (MVVVMVGSFCLCYVPYAALAMYMV). Over 272 to 279 (NNRNHGLY) the chain is Extracellular. The chain crosses the membrane as a helical span at residues 280 to 304 (LRLVTIPAFFSKSSCVYNPIIYCFM). The residue at position 291 (Lys291) is an N6-(retinylidene)lysine. Over 305–346 (NKQFRACILEMVCRKPMTDESDMSGSQKTEVSTVSSSKVGPH) the chain is Cytoplasmic. The interval 322 to 346 (TDESDMSGSQKTEVSTVSSSKVGPH) is disordered. The segment covering 330 to 346 (SQKTEVSTVSSSKVGPH) has biased composition (low complexity).

It belongs to the G-protein coupled receptor 1 family. Opsin subfamily. In terms of processing, phosphorylated on some or all of the serine and threonine residues present in the C-terminal region. As to expression, expressed in cone photoreceptor cells.

It localises to the cell membrane. The protein localises to the photoreceptor inner segment. Its subcellular location is the cell projection. The protein resides in the cilium. It is found in the photoreceptor outer segment. It localises to the cytoplasm. The protein localises to the perinuclear region. Its function is as follows. Visual pigments are the light-absorbing molecules that mediate vision. They consist of an apoprotein, opsin, covalently linked to cis-retinal. Required for the maintenance of cone outer segment organization in the ventral retina, but not essential for the maintenance of functioning cone photoreceptors. Involved in ensuring correct abundance and localization of retinal membrane proteins. May increase spectral sensitivity in dim light. The polypeptide is Short-wave-sensitive opsin 1 (Opn1sw) (Rattus norvegicus (Rat)).